Reading from the N-terminus, the 209-residue chain is Ribonuclease HII (209 aa).

The RNase H type-2 domain occupies 5–202 (SMTLGIDEAG…KNRILNPKLL (198 aa)). A divalent metal cation-binding residues include D11, E12, and D108.

Belongs to the RNase HII family. Mn(2+) serves as cofactor. Mg(2+) is required as a cofactor.

The protein resides in the cytoplasm. The enzyme catalyses Endonucleolytic cleavage to 5'-phosphomonoester.. Its function is as follows. Endonuclease that specifically degrades the RNA of RNA-DNA hybrids. The sequence is that of Ribonuclease HII (rnhB) from Helicobacter pylori (strain J99 / ATCC 700824) (Campylobacter pylori J99).